Here is a 245-residue protein sequence, read N- to C-terminus: tRNA (guanine-N(1)-)-methyltransferase (245 aa).

S-adenosyl-L-methionine-binding positions include Gly108 and 127–132 (IGDYVL).

The protein belongs to the RNA methyltransferase TrmD family. As to quaternary structure, homodimer.

It localises to the cytoplasm. It catalyses the reaction guanosine(37) in tRNA + S-adenosyl-L-methionine = N(1)-methylguanosine(37) in tRNA + S-adenosyl-L-homocysteine + H(+). In terms of biological role, specifically methylates guanosine-37 in various tRNAs. The sequence is that of tRNA (guanine-N(1)-)-methyltransferase from Lactobacillus delbrueckii subsp. bulgaricus (strain ATCC 11842 / DSM 20081 / BCRC 10696 / JCM 1002 / NBRC 13953 / NCIMB 11778 / NCTC 12712 / WDCM 00102 / Lb 14).